The sequence spans 464 residues: Protein FAM90A1 (464 aa).

Disordered regions lie at residues 1 to 43 (MMAR…PRLK), 71 to 294 (PNFG…KRSA), 312 to 386 (PFQI…AASH), 412 to 437 (PSFHSPEKPGAFLAQSPHVSEKSEGP), and 445 to 464 (VLYEDLQVPSSSEDSDSDLE). 2 stretches are compositionally biased toward basic and acidic residues: residues 74 to 83 (GEKEGKENLK) and 97 to 114 (NKDKGEKEERPRPQDPQR). Residues 180–197 (LASLSPLRKASLSSSSSL) show a composition bias toward low complexity. Polar residues predominate over residues 344–355 (TSPQTGTRTPAQ).

It belongs to the FAM90 family.

This is Protein FAM90A1 (FAM90A1) from Homo sapiens (Human).